We begin with the raw amino-acid sequence, 37 residues long: Large ribosomal subunit protein bL36 (37 aa).

Belongs to the bacterial ribosomal protein bL36 family.

The chain is Large ribosomal subunit protein bL36 from Mycoplasmopsis pulmonis (strain UAB CTIP) (Mycoplasma pulmonis).